The sequence spans 512 residues: Cytochrome P450 monooxygenase pbrB (512 aa).

A helical membrane pass occupies residues 6 to 29; sequence LSFPAAVGAAFGAFAIYVVARCIY. Cysteine 452 contributes to the heme binding site.

It belongs to the cytochrome P450 family. The cofactor is heme.

The protein resides in the membrane. The protein operates within secondary metabolite biosynthesis; terpenoid biosynthesis. Functionally, cytochrome P450 monooxygenase; part of the gene cluster that mediates the biosynthesis of the sesquiterpenoid aspterric acid (AA), an inhibitor of dihydroxy-acid dehydratase (DHAD) effective as an herbicide. PbrB catalyzes the second step within the pathway and converts (-)-daucane produced by the terpene cyclase pbrA into an alpha-epoxy carboxylate intermediate which is further converted into the tricyclic aspterric acid by the cytochrome P450 monooxygenase pbrC. This is Cytochrome P450 monooxygenase pbrB from Penicillium brasilianum.